The sequence spans 302 residues: 4-hydroxy-tetrahydrodipicolinate synthase (302 aa).

Position 57 (Thr-57) interacts with pyruvate. The Proton donor/acceptor role is filled by Tyr-145. The active-site Schiff-base intermediate with substrate is Lys-173. Ile-213 provides a ligand contact to pyruvate.

Belongs to the DapA family. In terms of assembly, homotetramer; dimer of dimers.

It is found in the cytoplasm. It catalyses the reaction L-aspartate 4-semialdehyde + pyruvate = (2S,4S)-4-hydroxy-2,3,4,5-tetrahydrodipicolinate + H2O + H(+). It participates in amino-acid biosynthesis; L-lysine biosynthesis via DAP pathway; (S)-tetrahydrodipicolinate from L-aspartate: step 3/4. Its function is as follows. Catalyzes the condensation of (S)-aspartate-beta-semialdehyde [(S)-ASA] and pyruvate to 4-hydroxy-tetrahydrodipicolinate (HTPA). This chain is 4-hydroxy-tetrahydrodipicolinate synthase, found in Corynebacterium aurimucosum (strain ATCC 700975 / DSM 44827 / CIP 107346 / CN-1) (Corynebacterium nigricans).